Here is a 554-residue protein sequence, read N- to C-terminus: Dihydroxy-acid dehydratase (554 aa).

Position 78 (D78) interacts with Mg(2+). [2Fe-2S] cluster is bound at residue C119. D120 and K121 together coordinate Mg(2+). K121 carries the post-translational modification N6-carboxylysine. Position 191 (C191) interacts with [2Fe-2S] cluster. E442 is a binding site for Mg(2+). Residue S468 is the Proton acceptor of the active site.

It belongs to the IlvD/Edd family. In terms of assembly, homodimer. It depends on [2Fe-2S] cluster as a cofactor. The cofactor is Mg(2+).

It carries out the reaction (2R)-2,3-dihydroxy-3-methylbutanoate = 3-methyl-2-oxobutanoate + H2O. It catalyses the reaction (2R,3R)-2,3-dihydroxy-3-methylpentanoate = (S)-3-methyl-2-oxopentanoate + H2O. It functions in the pathway amino-acid biosynthesis; L-isoleucine biosynthesis; L-isoleucine from 2-oxobutanoate: step 3/4. It participates in amino-acid biosynthesis; L-valine biosynthesis; L-valine from pyruvate: step 3/4. Its function is as follows. Functions in the biosynthesis of branched-chain amino acids. Catalyzes the dehydration of (2R,3R)-2,3-dihydroxy-3-methylpentanoate (2,3-dihydroxy-3-methylvalerate) into 2-oxo-3-methylpentanoate (2-oxo-3-methylvalerate) and of (2R)-2,3-dihydroxy-3-methylbutanoate (2,3-dihydroxyisovalerate) into 2-oxo-3-methylbutanoate (2-oxoisovalerate), the penultimate precursor to L-isoleucine and L-valine, respectively. The sequence is that of Dihydroxy-acid dehydratase from Thermotoga sp. (strain RQ2).